The primary structure comprises 77 residues: Acyl carrier protein (77 aa).

The 76-residue stretch at 1–76 folds into the Carrier domain; that stretch reads MSVEQRVKEI…DVLDYIKSKQ (76 aa). Serine 36 is modified (O-(pantetheine 4'-phosphoryl)serine).

This sequence belongs to the acyl carrier protein (ACP) family. In terms of processing, 4'-phosphopantetheine is transferred from CoA to a specific serine of apo-ACP by AcpS. This modification is essential for activity because fatty acids are bound in thioester linkage to the sulfhydryl of the prosthetic group.

Its subcellular location is the cytoplasm. The protein operates within lipid metabolism; fatty acid biosynthesis. In terms of biological role, carrier of the growing fatty acid chain in fatty acid biosynthesis. The polypeptide is Acyl carrier protein (Sulfurihydrogenibium sp. (strain YO3AOP1)).